The chain runs to 158 residues: NAD(P)H-quinone oxidoreductase subunit J, chloroplastic (158 aa).

The protein belongs to the complex I 30 kDa subunit family. NDH is composed of at least 16 different subunits, 5 of which are encoded in the nucleus.

It is found in the plastid. It localises to the chloroplast thylakoid membrane. The enzyme catalyses a plastoquinone + NADH + (n+1) H(+)(in) = a plastoquinol + NAD(+) + n H(+)(out). It carries out the reaction a plastoquinone + NADPH + (n+1) H(+)(in) = a plastoquinol + NADP(+) + n H(+)(out). Its function is as follows. NDH shuttles electrons from NAD(P)H:plastoquinone, via FMN and iron-sulfur (Fe-S) centers, to quinones in the photosynthetic chain and possibly in a chloroplast respiratory chain. The immediate electron acceptor for the enzyme in this species is believed to be plastoquinone. Couples the redox reaction to proton translocation, and thus conserves the redox energy in a proton gradient. This chain is NAD(P)H-quinone oxidoreductase subunit J, chloroplastic, found in Eucalyptus globulus subsp. globulus (Tasmanian blue gum).